The primary structure comprises 403 residues: Presqualene diphosphate synthase (403 aa).

Residues aspartate 84, glutamate 87, and aspartate 88 each coordinate Mg(2+).

This sequence belongs to the phytoene/squalene synthase family. The cofactor is Mg(2+).

It catalyses the reaction 2 (2E,6E)-farnesyl diphosphate = presqualene diphosphate + diphosphate. In terms of biological role, catalyzes the biosynthesis of presqualene diphosphate (PSPP). Works in combination with SSL-2 or SSL-3 to produce respectively squalene or botryococcene. In most other species, farnesyl diphosphate (FPP) is converted into squalene in a two-step reaction by a single enzyme. The chain is Presqualene diphosphate synthase (SSL-1) from Botryococcus braunii (Green alga).